Here is a 135-residue protein sequence, read N- to C-terminus: Small ribosomal subunit protein uS11 (135 aa).

Belongs to the universal ribosomal protein uS11 family. Part of the 30S ribosomal subunit. Interacts with proteins S7 and S18. Binds to IF-3.

Its function is as follows. Located on the platform of the 30S subunit, it bridges several disparate RNA helices of the 16S rRNA. Forms part of the Shine-Dalgarno cleft in the 70S ribosome. This Cutibacterium acnes (strain DSM 16379 / KPA171202) (Propionibacterium acnes) protein is Small ribosomal subunit protein uS11.